The sequence spans 314 residues: Lipoyl synthase (314 aa).

A disordered region spans residues 1-24; that stretch reads MMDTPIIRHPEKVRRPDNPSPRKP. Positions 53, 58, 64, 79, 83, 86, and 293 each coordinate [4Fe-4S] cluster. In terms of domain architecture, Radical SAM core spans 65-282; that stretch reads WKRRHATFMI…ADIARGKGFL (218 aa). Basic and acidic residues predominate over residues 294–308; the sequence is HHADRDFEDLRKARQ. The tract at residues 294–314 is disordered; the sequence is HHADRDFEDLRKARQDAAATK.

The protein belongs to the radical SAM superfamily. Lipoyl synthase family. [4Fe-4S] cluster is required as a cofactor.

Its subcellular location is the cytoplasm. The enzyme catalyses [[Fe-S] cluster scaffold protein carrying a second [4Fe-4S](2+) cluster] + N(6)-octanoyl-L-lysyl-[protein] + 2 oxidized [2Fe-2S]-[ferredoxin] + 2 S-adenosyl-L-methionine + 4 H(+) = [[Fe-S] cluster scaffold protein] + N(6)-[(R)-dihydrolipoyl]-L-lysyl-[protein] + 4 Fe(3+) + 2 hydrogen sulfide + 2 5'-deoxyadenosine + 2 L-methionine + 2 reduced [2Fe-2S]-[ferredoxin]. It functions in the pathway protein modification; protein lipoylation via endogenous pathway; protein N(6)-(lipoyl)lysine from octanoyl-[acyl-carrier-protein]: step 2/2. Functionally, catalyzes the radical-mediated insertion of two sulfur atoms into the C-6 and C-8 positions of the octanoyl moiety bound to the lipoyl domains of lipoate-dependent enzymes, thereby converting the octanoylated domains into lipoylated derivatives. The polypeptide is Lipoyl synthase (Rhodospirillum rubrum (strain ATCC 11170 / ATH 1.1.1 / DSM 467 / LMG 4362 / NCIMB 8255 / S1)).